Here is an 89-residue protein sequence, read N- to C-terminus: UPF0335 protein Nham_1221 (89 aa).

It belongs to the UPF0335 family.

In Nitrobacter hamburgensis (strain DSM 10229 / NCIMB 13809 / X14), this protein is UPF0335 protein Nham_1221.